Here is a 235-residue protein sequence, read N- to C-terminus: Glucosamine-6-phosphate deaminase (235 aa).

Asp-62 serves as the catalytic Proton acceptor; for enolization step. Asn-128 (for ring-opening step) is an active-site residue. The active-site Proton acceptor; for ring-opening step is the His-130. Residue Glu-135 is the For ring-opening step of the active site.

The protein belongs to the glucosamine/galactosamine-6-phosphate isomerase family. NagB subfamily.

The enzyme catalyses alpha-D-glucosamine 6-phosphate + H2O = beta-D-fructose 6-phosphate + NH4(+). It participates in amino-sugar metabolism; N-acetylneuraminate degradation; D-fructose 6-phosphate from N-acetylneuraminate: step 5/5. Its function is as follows. Catalyzes the reversible isomerization-deamination of glucosamine 6-phosphate (GlcN6P) to form fructose 6-phosphate (Fru6P) and ammonium ion. The polypeptide is Glucosamine-6-phosphate deaminase (Streptococcus gordonii (strain Challis / ATCC 35105 / BCRC 15272 / CH1 / DL1 / V288)).